The following is a 299-amino-acid chain: Glycine--tRNA ligase alpha subunit (299 aa).

This sequence belongs to the class-II aminoacyl-tRNA synthetase family. As to quaternary structure, tetramer of two alpha and two beta subunits.

The protein resides in the cytoplasm. The enzyme catalyses tRNA(Gly) + glycine + ATP = glycyl-tRNA(Gly) + AMP + diphosphate. The chain is Glycine--tRNA ligase alpha subunit (glyQ) from Synechocystis sp. (strain ATCC 27184 / PCC 6803 / Kazusa).